The primary structure comprises 89 residues: MAQEIKMVYDTVKQGLSQLKNSAELKSSLPGHLSGRNHLNVVKSIEQLNKDIKELTEAYASVLAKHIAQTESAVNAMKETDENISSSMK.

In Bacillus subtilis (strain 168), this protein is Protein YxiC (yxiC).